Reading from the N-terminus, the 411-residue chain is Probable 26S proteasome regulatory subunit rpn-6.2 (411 aa).

Positions 212 to 381 (YKTSFSYFYE…DTVVIYPKAG (170 aa)) constitute a PCI domain.

Belongs to the proteasome subunit S9 family. As to quaternary structure, component of the lid subcomplex of the 19S proteasome regulatory particle complex (also named PA700 complex). The 26S proteasome consists of a 20S proteasome core and two 19S regulatory subunits.

In terms of biological role, component of the lid subcomplex of the 26S proteasome, a multiprotein complex involved in the ATP-dependent degradation of ubiquitinated proteins. In the complex, rpn-6.2 is required for proteasome assembly. This Caenorhabditis briggsae protein is Probable 26S proteasome regulatory subunit rpn-6.2.